The primary structure comprises 131 residues: DVYKGGGGGRYGGGRYGGGGGYGGGLGGGGLGGGGLGGGKGLGGGGLGGGGLGGGGLGGGGLGGGKGLGGGGLGGGGLGGGGLGGGGLGGGKGLGGGGLGGGGLGGGRGGYGGGGYGGGYGGGYGGGKYKG.

Lys-130 is subject to Lysine amide.

Expressed in hemocytes and secreted into the plasma following bacterial immune challenge.

It localises to the secreted. Functionally, antimicrobial protein. Strong activity against the Gram-negative bacterium E.coli SBS363 and yeast C.albicans. No detectable activity against the Gram-positive bacterium M.luteus. This chain is Acanthoscurrin-2, found in Acanthoscurria gomesiana (Tarantula spider).